The sequence spans 421 residues: UDP-N-acetylglucosamine 1-carboxyvinyltransferase (421 aa).

22-23 provides a ligand contact to phosphoenolpyruvate; that stretch reads KN. Residue arginine 93 coordinates UDP-N-acetyl-alpha-D-glucosamine. Catalysis depends on cysteine 117, which acts as the Proton donor. At cysteine 117 the chain carries 2-(S-cysteinyl)pyruvic acid O-phosphothioketal. UDP-N-acetyl-alpha-D-glucosamine is bound by residues 122-126, aspartate 308, and valine 330; that span reads RPVDL.

The protein belongs to the EPSP synthase family. MurA subfamily.

It localises to the cytoplasm. The catalysed reaction is phosphoenolpyruvate + UDP-N-acetyl-alpha-D-glucosamine = UDP-N-acetyl-3-O-(1-carboxyvinyl)-alpha-D-glucosamine + phosphate. The protein operates within cell wall biogenesis; peptidoglycan biosynthesis. Functionally, cell wall formation. Adds enolpyruvyl to UDP-N-acetylglucosamine. The polypeptide is UDP-N-acetylglucosamine 1-carboxyvinyltransferase (Azotobacter vinelandii (strain DJ / ATCC BAA-1303)).